The primary structure comprises 222 residues: Urease accessory protein UreF (222 aa).

This sequence belongs to the UreF family. As to quaternary structure, ureD, UreF and UreG form a complex that acts as a GTP-hydrolysis-dependent molecular chaperone, activating the urease apoprotein by helping to assemble the nickel containing metallocenter of UreC. The UreE protein probably delivers the nickel.

It localises to the cytoplasm. Functionally, required for maturation of urease via the functional incorporation of the urease nickel metallocenter. The sequence is that of Urease accessory protein UreF from Roseobacter denitrificans (strain ATCC 33942 / OCh 114) (Erythrobacter sp. (strain OCh 114)).